The chain runs to 484 residues: SPI-2 type 3 secretion system translocon protein SctE (484 aa).

2 helical membrane-spanning segments follow: residues Phe85–Phe105 and Gly152–Leu172. 2 coiled-coil regions span residues Asn107–Gly152 and Asn413–Gly457.

Belongs to the SctE/SipB/YopB family. In terms of assembly, the core secretion machinery of the T3SS is composed of approximately 20 different proteins, including cytoplasmic components, a base, an export apparatus and a needle. This subunit is involved in the formation of a pore, called the translocon, in host membrane. May form a complex with SseB and SseD/SctB2. SseB is required for correct localization of SseC/SctE2 on the bacterial cell surface.

It is found in the secreted. The protein resides in the cell surface. It localises to the host membrane. Its function is as follows. Component of the type III secretion system 2 (SPI-2 T3SS), also called injectisome, which is used to inject bacterial effector proteins into eukaryotic host cells. SseC/SctE2 and SseD/SctB2 are inserted into the host membrane where they form a pore and allow the translocation of effector proteins into the cytosol of target cells. In terms of biological role, required for the translocation of SPI-2 effector proteins. Required for systemic Salmonella infection of the mouse. Essential for SpvB-induced actin depolymerization in the host cell cytoplasm. The chain is SPI-2 type 3 secretion system translocon protein SctE from Salmonella typhimurium (strain LT2 / SGSC1412 / ATCC 700720).